A 432-amino-acid polypeptide reads, in one-letter code: Adenylosuccinate synthetase (432 aa).

Residues 13–19 and 41–43 contribute to the GTP site; these read GDEGKGK and GHT. D14 acts as the Proton acceptor in catalysis. Mg(2+) contacts are provided by D14 and G41. IMP contacts are provided by residues 14–17, 39–42, T130, R144, Q225, T240, and R304; these read DEGK and NAGH. The Proton donor role is filled by H42. 300 to 306 provides a ligand contact to substrate; sequence AVTGRPR. GTP contacts are provided by residues R306, 332-334, and 415-417; these read KLD and STG.

The protein belongs to the adenylosuccinate synthetase family. Homodimer. Mg(2+) serves as cofactor.

Its subcellular location is the cytoplasm. It catalyses the reaction IMP + L-aspartate + GTP = N(6)-(1,2-dicarboxyethyl)-AMP + GDP + phosphate + 2 H(+). It functions in the pathway purine metabolism; AMP biosynthesis via de novo pathway; AMP from IMP: step 1/2. Functionally, plays an important role in the de novo pathway of purine nucleotide biosynthesis. Catalyzes the first committed step in the biosynthesis of AMP from IMP. This chain is Adenylosuccinate synthetase, found in Histophilus somni (strain 2336) (Haemophilus somnus).